Here is a 423-residue protein sequence, read N- to C-terminus: Maltoporin 1 (423 aa).

The N-terminal stretch at 1 to 23 (MNTTLRALSVALAAALIAPSAFA) is a signal peptide.

Belongs to the porin LamB (TC 1.B.3) family. In terms of assembly, homotrimer formed of three 18-stranded antiparallel beta-barrels, containing three independent channels.

The protein localises to the cell outer membrane. The enzyme catalyses beta-maltose(in) = beta-maltose(out). Functionally, involved in the transport of maltose and maltodextrins. This is Maltoporin 1 from Klebsiella pneumoniae subsp. pneumoniae (strain ATCC 700721 / MGH 78578).